The primary structure comprises 203 residues: Abscisic acid receptor PYL5 (203 aa).

Polar residues predominate over residues 1 to 18 (MRSPVQLQHGSDATNGFH). The disordered stretch occupies residues 1 to 29 (MRSPVQLQHGSDATNGFHTLQPHDQTDGP). Positions 51-201 (HDVGPDQCCS…NLQSLARSTN (151 aa)) are START-like. Abscisate-binding positions include lysine 87, 117 to 122 (AVSSTE), 144 to 150 (RLKNYRS), and glutamate 166. A Gate loop motif is present at residues 113–117 (SGLPA). The Latch loop signature appears at 143-145 (HRL).

This sequence belongs to the PYR/PYL/RCAR abscisic acid intracellular receptor family. In terms of assembly, monomer. Homodimer. Binds ABA on one subunit only. Binds to CARs protein in an ABA-independent manner, both at the plasma membrane and in the nucleus. Binds both (-)-ABA and (+)-ABA. Interacts with HAB1, ABI1 and ABI2, and possibly with other PP2Cs.

Its subcellular location is the cytoplasm. The protein resides in the nucleus. It localises to the cell membrane. Its function is as follows. Receptor for abscisic acid (ABA) required for ABA-mediated responses such as stomatal closure and germination inhibition. Inhibits the activity of group-A protein phosphatases type 2C (PP2Cs) in an ABA-independent manner but more efficiently when activated by ABA. Confers enhanced sensitivity to ABA. Can be activated by both (-)-ABA and (+)-ABA. The sequence is that of Abscisic acid receptor PYL5 (PYL5) from Arabidopsis thaliana (Mouse-ear cress).